The following is a 334-amino-acid chain: Protein-methionine-sulfoxide reductase catalytic subunit MsrP (334 aa).

Residues Met-1 to Ala-44 constitute a signal peptide (tat-type signal). Residues Asn-88, Tyr-91–Glu-92, Cys-146, Thr-181, Asn-233, Arg-238, and Gly-249–Lys-251 contribute to the Mo-molybdopterin site.

It belongs to the MsrP family. Heterodimer of a catalytic subunit (MsrP) and a heme-binding subunit (MsrQ). Requires Mo-molybdopterin as cofactor. Post-translationally, predicted to be exported by the Tat system. The position of the signal peptide cleavage has not been experimentally proven.

Its subcellular location is the periplasm. The catalysed reaction is L-methionyl-[protein] + a quinone + H2O = L-methionyl-(S)-S-oxide-[protein] + a quinol. It catalyses the reaction L-methionyl-[protein] + a quinone + H2O = L-methionyl-(R)-S-oxide-[protein] + a quinol. In terms of biological role, part of the MsrPQ system that repairs oxidized periplasmic proteins containing methionine sulfoxide residues (Met-O), using respiratory chain electrons. Thus protects these proteins from oxidative-stress damage caused by reactive species of oxygen and chlorine generated by the host defense mechanisms. MsrPQ is essential for the maintenance of envelope integrity under bleach stress, rescuing a wide series of structurally unrelated periplasmic proteins from methionine oxidation, including the primary periplasmic chaperone SurA and the lipoprotein Pal. The catalytic subunit MsrP is non-stereospecific, being able to reduce both (R-) and (S-) diastereoisomers of methionine sulfoxide. This chain is Protein-methionine-sulfoxide reductase catalytic subunit MsrP, found in Escherichia coli O157:H7.